We begin with the raw amino-acid sequence, 190 residues long: Elongation factor P-like protein (190 aa).

It belongs to the elongation factor P family.

This chain is Elongation factor P-like protein, found in Pectobacterium carotovorum subsp. carotovorum (strain PC1).